Consider the following 160-residue polypeptide: Endoribonuclease YbeY (160 aa).

Residues H118, H122, and H128 each coordinate Zn(2+).

It belongs to the endoribonuclease YbeY family. The cofactor is Zn(2+).

It is found in the cytoplasm. Functionally, single strand-specific metallo-endoribonuclease involved in late-stage 70S ribosome quality control and in maturation of the 3' terminus of the 16S rRNA. The sequence is that of Endoribonuclease YbeY from Treponema pallidum (strain Nichols).